A 361-amino-acid polypeptide reads, in one-letter code: Phospho-N-acetylmuramoyl-pentapeptide-transferase (361 aa).

10 helical membrane passes run Arg-25–Ile-45, Thr-73–Leu-93, Val-98–Ile-118, Ile-139–Thr-159, Ile-168–Phe-188, Gly-200–Ser-220, Ala-237–Phe-257, Val-264–Ile-284, Met-289–Val-309, and Val-339–Lys-359.

The protein belongs to the glycosyltransferase 4 family. MraY subfamily. Mg(2+) is required as a cofactor.

Its subcellular location is the cell inner membrane. The enzyme catalyses UDP-N-acetyl-alpha-D-muramoyl-L-alanyl-gamma-D-glutamyl-meso-2,6-diaminopimeloyl-D-alanyl-D-alanine + di-trans,octa-cis-undecaprenyl phosphate = di-trans,octa-cis-undecaprenyl diphospho-N-acetyl-alpha-D-muramoyl-L-alanyl-D-glutamyl-meso-2,6-diaminopimeloyl-D-alanyl-D-alanine + UMP. It participates in cell wall biogenesis; peptidoglycan biosynthesis. Its function is as follows. Catalyzes the initial step of the lipid cycle reactions in the biosynthesis of the cell wall peptidoglycan: transfers peptidoglycan precursor phospho-MurNAc-pentapeptide from UDP-MurNAc-pentapeptide onto the lipid carrier undecaprenyl phosphate, yielding undecaprenyl-pyrophosphoryl-MurNAc-pentapeptide, known as lipid I. The polypeptide is Phospho-N-acetylmuramoyl-pentapeptide-transferase (Xanthomonas oryzae pv. oryzae (strain MAFF 311018)).